Here is a 1644-residue protein sequence, read N- to C-terminus: Terminal uridylyltransferase 4 (1644 aa).

Disordered regions lie at residues 30-60 (SNQT…KQND) and 75-277 (AASV…EMDY). Ser102 carries the post-translational modification Phosphoserine. Polar residues predominate over residues 108 to 123 (KGSSQTKLEKTPSLQT). Ser131 carries the phosphoserine modification. Polar residues-rich tracts occupy residues 146–156 (AEATTEKALNS) and 163–174 (TPTSQMKLQKTP). The residue at position 176 (Ser176) is a Phosphoserine. Composition is skewed to polar residues over residues 194 to 209 (QTES…SSFV) and 226 to 242 (LENS…TDNI). The segment covering 258 to 272 (DLSKMKSEESNKENS) has biased composition (basic and acidic residues). The required for interaction with LIN28A and pre-let-7 RNA stretch occupies residues 273–353 (SEMDYLENAT…KEKRHKKNIL (81 aa)). Residues Cys326, Cys329, His342, and His348 each coordinate Zn(2+). Residues 603 to 623 (IADENKAKADEPKDDTKKTET) show a composition bias toward basic and acidic residues. The disordered stretch occupies residues 603-640 (IADENKAKADEPKDDTKKTETDNQSNAAKAKHGKSPLT). One can recognise a PAP-associated 1 domain in the interval 649 to 698 (LGQLWLELLKFYTLDFALEEYVICVRIQDILTRENKNWPKRRIAIEDPFS). 2 disordered regions span residues 733–759 (KGGN…VKSD) and 812–841 (HGQD…DLTP). The segment covering 745 to 755 (KEKGKLSSKKP) has biased composition (basic residues). A compositionally biased stretch (low complexity) spans 815-827 (DSSSLSTASGGSD). Over residues 828–837 (LKQKSAEKQG) the composition is skewed to basic and acidic residues. The segment at 918 to 1634 (DKFILTSGKP…CATRRCRERC (717 aa)) is sufficient for monouridylation activity. The CCHC-type 1 zinc-finger motif lies at 930–947 (IVCSICKKDGHSKNDCPE). Residues 1015–1018 (SSKN), 1025–1028 (SDLD), Asn1098, Lys1120, 1138–1142 (SYAYI), and His1254 each bind UTP. Positions 1026 and 1028 each coordinate Mg(2+). The PAP-associated 2 domain occupies 1201–1254 (SLGELWLGLLRFYTEEFDFKEYVISIRQKKLLTTFEKQWTSKCIAIEDPFDLNH). Residues 1310–1327 (RCCRVCGKIGHYMKDCPK) form a CCHC-type 2 zinc finger. The tract at residues 1329-1350 (KRLKKKDSEEEKEGNEEEKDSR) is disordered. A CCHC-type 3 zinc finger spans residues 1358–1375 (LRCFICGDAGHVRRECPE). The span at 1402-1427 (AGSAQQQSDQSIRTRQSSECSDSPSY) shows a compositional bias: low complexity. The disordered stretch occupies residues 1402–1483 (AGSAQQQSDQ…LYNFPQSPPA (82 aa)). Residues 1428 to 1450 (SPQPQPFPQNSPQPSALPPPPSQ) are compositionally biased toward pro residues. Over residues 1451 to 1473 (PGSQPKLGPPQQGGQPPHQVQMP) the composition is skewed to low complexity. Arg1624 carries the omega-N-methylarginine modification.

The protein belongs to the DNA polymerase type-B-like family. In terms of assembly, interacts with LIN28A in the presence of pre-let-7 RNA. Interacts with T2BP. Interacts with MOV10; the interaction is RNA-dependent. Requires Mg(2+) as cofactor. Mn(2+) is required as a cofactor. Ubiquitously expressed.

The protein resides in the nucleus. It localises to the cytoplasm. Its subcellular location is the cytoplasmic ribonucleoprotein granule. It carries out the reaction RNA(n) + UTP = RNA(n)-3'-uridine ribonucleotide + diphosphate. Uridylyltransferase that mediates the terminal uridylation of mRNAs with short (less than 25 nucleotides) poly(A) tails, hence facilitating global mRNA decay. Essential for both oocyte maturation and fertility. Through 3' terminal uridylation of mRNA, sculpts, with TUT7, the maternal transcriptome by eliminating transcripts during oocyte growth. Involved in microRNA (miRNA)-induced gene silencing through uridylation of deadenylated miRNA targets. Also functions as an integral regulator of microRNA biogenesiS using 3 different uridylation mechanisms. Acts as a suppressor of miRNA biogenesis by mediating the terminal uridylation of some miRNA precursors, including that of let-7 (pre-let-7), miR107, miR-143 and miR-200c. Uridylated miRNAs are not processed by Dicer and undergo degradation. Degradation of pre-let-7 contributes to the maintenance of embryonic stem (ES) cell pluripotency. Also catalyzes the 3' uridylation of miR-26A, a miRNA that targets IL6 transcript. This abrogates the silencing of IL6 transcript, hence promoting cytokine expression. In the absence of LIN28A, TUT7 and TUT4 monouridylate group II pre-miRNAs, which includes most of pre-let7 members, that shapes an optimal 3' end overhang for efficient processing. Add oligo-U tails to truncated pre-miRNAS with a 5' overhang which may promote rapid degradation of non-functional pre-miRNA species. May also suppress Toll-like receptor-induced NF-kappa-B activation via binding to T2BP. Does not play a role in replication-dependent histone mRNA degradation. Due to functional redundancy between TUT4 and TUT7, the identification of the specific role of each of these proteins is difficult. TUT4 and TUT7 restrict retrotransposition of long interspersed element-1 (LINE-1) in cooperation with MOV10 counteracting the RNA chaperonne activity of L1RE1. TUT7 uridylates LINE-1 mRNAs in the cytoplasm which inhibits initiation of reverse transcription once in the nucleus, whereas uridylation by TUT4 destabilizes mRNAs in cytoplasmic ribonucleoprotein granules. The protein is Terminal uridylyltransferase 4 of Mus musculus (Mouse).